The primary structure comprises 367 residues: Quinolinate synthase (367 aa).

Iminosuccinate is bound by residues H45 and S62. Residue C109 participates in [4Fe-4S] cluster binding. Iminosuccinate-binding positions include 140-142 (YVN) and S161. Residue C229 coordinates [4Fe-4S] cluster. Iminosuccinate-binding positions include 255-257 (HPE) and T272. [4Fe-4S] cluster is bound at residue C319.

The protein belongs to the quinolinate synthase family. Type 3 subfamily. [4Fe-4S] cluster serves as cofactor.

The protein localises to the cytoplasm. The enzyme catalyses iminosuccinate + dihydroxyacetone phosphate = quinolinate + phosphate + 2 H2O + H(+). Its pathway is cofactor biosynthesis; NAD(+) biosynthesis; quinolinate from iminoaspartate: step 1/1. Its function is as follows. Catalyzes the condensation of iminoaspartate with dihydroxyacetone phosphate to form quinolinate. This Geobacillus thermodenitrificans (strain NG80-2) protein is Quinolinate synthase.